Reading from the N-terminus, the 581-residue chain is Sodium/hydrogen exchanger 8 (581 aa).

Transmembrane regions (helical) follow at residues 60–80 (MTIF…HLLI), 84–104 (LHFL…GAVI), 123–143 (PNMF…YSLH), 156–176 (LFAV…IYFL), 191–211 (FAFG…IFNA), 264–284 (FLKM…ISAL), 311–331 (GLAE…GIVM), 354–374 (VAFL…FSFP), 379–399 (ISFV…NIFP), 417–437 (MFIM…SLHL), and 451–471 (TTIV…MPLI). Thr-510 carries the post-translational modification Phosphothreonine. Residues Ser-571 and Ser-573 each carry the phosphoserine modification.

This sequence belongs to the monovalent cation:proton antiporter 1 (CPA1) transporter (TC 2.A.36) family. Ubiquitous. Strongly expressed in skeletal muscle and kidney. Detected throughout the entire gastrointestinal tract, with high expression detected in stomach, duodenum and ascending colon.

The protein resides in the golgi apparatus membrane. It is found in the golgi apparatus. Its subcellular location is the trans-Golgi network membrane. The protein localises to the endosome. It localises to the multivesicular body membrane. The protein resides in the apical cell membrane. It is found in the cytoplasmic vesicle. Its subcellular location is the secretory vesicle. The protein localises to the acrosome. The catalysed reaction is Na(+)(in) + H(+)(out) = Na(+)(out) + H(+)(in). Its activity is regulated as follows. HOE642 inhibits SLC9A8 activity. Functionally, na(+)/H(+) antiporter. Mediates the electoneutral exchange of intracellular H(+) ions for extracellular Na(+) in 1:1 stoichiometry. Acts as an Na(+)/H(+) exchanger in the trans-Golgi. Contributes to the regulation of pH regulation of Golgi apparatus, and consequently, in protein trafficking and endosomal morphology. In germ cells, plays a crucial role in acrosome biogenesis and sperm development, probably by playing a role in the fusion of the Golgi-derived vesicles that form the acrosomal cap. Can also be active at the cell surface of specialized cells. In the small intestine, at the cell membrane, plays a major physiological role in transepithelial absorption of Na(+) and regulates intracellular pH homeostasis of intestinal epithelial cells. Acts as an important regulator of mucosal integrity in the intestine and in the stomach, could mediate the pH fluctuation necessary for mucin exocytosis or assist membrane trafficking of other proteins. Plays a role in photoreceptor survival and in the maintenance of intracellular pH homeostasis in retinal pigment epithelium (RPE cells). The sequence is that of Sodium/hydrogen exchanger 8 from Homo sapiens (Human).